The primary structure comprises 547 residues: Nitrosoguanidine resistance protein SNG1 (547 aa).

Residues 35-86 are disordered; it reads NQRFAEGSGHSSDLAKSLEDYRPPDEKPSSLSSVGEGGANEEEKGGNDGGPL. Residues 50–62 are compositionally biased toward basic and acidic residues; that stretch reads KSLEDYRPPDEKP. A Phosphothreonine modification is found at threonine 91. 8 helical membrane passes run 109 to 129, 159 to 179, 318 to 338, 363 to 383, 394 to 414, 418 to 438, 457 to 477, and 488 to 508; these read FVLN…IYWG, ISAI…IYNA, ILMA…VLQL, LISW…SAIF, GGFV…GGAN, LSLV…TWII, YGYI…FLNL, and ILVA…KFAG. Residues 526–536 show a composition bias toward low complexity; sequence ATQRASRPAEA. Residues 526–547 are disordered; it reads ATQRASRPAEANTDKNNNPPGN.

This sequence to yeast YJR015W.

The protein resides in the membrane. May function as a N-methyl-N'nitro-N-nitrosoguanidine (MNNG) export permease. This is Nitrosoguanidine resistance protein SNG1 (SNG1) from Saccharomyces cerevisiae (strain ATCC 204508 / S288c) (Baker's yeast).